Consider the following 134-residue polypeptide: uncharacterized protein (134 aa).

The N-terminal stretch at 1–26 (MRLYKAMALCLPLVVICTSEVSQSTA) is a signal peptide. Positions 77–98 (GEKNEEVAGPVDGEGSEEEAFD) are disordered.

This is an uncharacterized protein from Encephalitozoon cuniculi (strain GB-M1) (Microsporidian parasite).